The chain runs to 72 residues: Translation initiation factor IF-1 (72 aa).

Residues 1-72 (MSKEDLIEFT…SKGRITFRFK (72 aa)) enclose the S1-like domain.

It belongs to the IF-1 family. As to quaternary structure, component of the 30S ribosomal translation pre-initiation complex which assembles on the 30S ribosome in the order IF-2 and IF-3, IF-1 and N-formylmethionyl-tRNA(fMet); mRNA recruitment can occur at any time during PIC assembly.

It localises to the cytoplasm. Functionally, one of the essential components for the initiation of protein synthesis. Stabilizes the binding of IF-2 and IF-3 on the 30S subunit to which N-formylmethionyl-tRNA(fMet) subsequently binds. Helps modulate mRNA selection, yielding the 30S pre-initiation complex (PIC). Upon addition of the 50S ribosomal subunit IF-1, IF-2 and IF-3 are released leaving the mature 70S translation initiation complex. The sequence is that of Translation initiation factor IF-1 from Gluconobacter oxydans (strain 621H) (Gluconobacter suboxydans).